The chain runs to 684 residues: Gabija protein GajB (684 aa).

A UvrD-like helicase ATP-binding domain is found at 14 to 351 (EQKSINAIFN…IEVINKIRND (338 aa)). 35–42 (SGAGAGKT) lines the ATP pocket.

Belongs to the helicase family. As to quaternary structure, homodimer. Interacts with GajA; 2 GajB dimers dock at opposite sides of the GajA complex to form a 4:4 GajA-GajB assembly (GajAB). GajAB interacts with Bacillus phage Phi3T Gad1 protein; this interaction forms a 4:4:8 GajAB-Gad1 complex and leads to GajAB inhibition.

Component of antiviral defense system Gabija type II, composed of GajA and GajB. Expression of Gabija type II in B.subtilis (strain BEST7003) confers resistance to phages phi105, and SpBeta. May be a helicase or contribute to GajA activation. In Bacillus cereus (strain HuB5-5), this protein is Gabija protein GajB.